Here is a 313-residue protein sequence, read N- to C-terminus: tRNA-cytidine(32) 2-sulfurtransferase (313 aa).

Positions 47-52 (SGGKDS) match the PP-loop motif motif. [4Fe-4S] cluster contacts are provided by C122, C125, and C213.

The protein belongs to the TtcA family. In terms of assembly, homodimer. Requires Mg(2+) as cofactor. It depends on [4Fe-4S] cluster as a cofactor.

It localises to the cytoplasm. The catalysed reaction is cytidine(32) in tRNA + S-sulfanyl-L-cysteinyl-[cysteine desulfurase] + AH2 + ATP = 2-thiocytidine(32) in tRNA + L-cysteinyl-[cysteine desulfurase] + A + AMP + diphosphate + H(+). Its pathway is tRNA modification. Its function is as follows. Catalyzes the ATP-dependent 2-thiolation of cytidine in position 32 of tRNA, to form 2-thiocytidine (s(2)C32). The sulfur atoms are provided by the cysteine/cysteine desulfurase (IscS) system. This chain is tRNA-cytidine(32) 2-sulfurtransferase, found in Yersinia pseudotuberculosis serotype IB (strain PB1/+).